We begin with the raw amino-acid sequence, 1706 residues long: Serine/threonine-protein kinase vps15 (1706 aa).

The region spanning Y24–F293 is the Protein kinase domain. Residues L30–T38 and K52 each bind ATP. One copy of the HEAT 1 repeat lies at N56–L94. Residue D146 is the Proton acceptor of the active site. 7 HEAT repeats span residues L426–D465, E466–S504, F511–K549, H587–K625, A626–P664, R665–F703, and K705–D743. S957 carries the post-translational modification Phosphoserine. The residue at position 958 (Y958) is a Phosphotyrosine. The interval T982–S1099 is disordered. Composition is skewed to basic and acidic residues over residues K984 to N1002 and D1014 to E1023. Over residues D1029 to Y1055 the composition is skewed to polar residues. Positions N1056–P1069 are enriched in low complexity. The span at K1079–G1090 shows a compositional bias: basic and acidic residues. 2 WD repeats span residues L1213–S1252 and L1368–S1407. Positions N1431–V1442 are enriched in polar residues. The segment at N1431–S1461 is disordered. Residues C1577 to S1622 form a WD 3 repeat.

It belongs to the protein kinase superfamily. Ser/Thr protein kinase family. In terms of assembly, component of the autophagy-specific vps34 PI3-kinase complex I composed of vps15, atg6, pik3/vps34, atg14 and atg38. Also a component of the vps34 PI3-kinase complex II composed of atg6, pik3, vps15 and vps38.

The catalysed reaction is L-seryl-[protein] + ATP = O-phospho-L-seryl-[protein] + ADP + H(+). It catalyses the reaction L-threonyl-[protein] + ATP = O-phospho-L-threonyl-[protein] + ADP + H(+). In terms of biological role, functions as a part of the autophagy-specific VPS34 PI3-kinase complex I that plays a role in autophagosome assembly. This complex is essential to recruit the atg8-phosphatidylinositol conjugate and the atg12-atg5 conjugate to the pre-autophagosomal structure. Also functions as part of the VPS34 PI3-kinase complex II. The chain is Serine/threonine-protein kinase vps15 from Schizosaccharomyces pombe (strain 972 / ATCC 24843) (Fission yeast).